A 566-amino-acid chain; its full sequence is DBIRD complex subunit ZNF326 (566 aa).

Disordered stretches follow at residues 19-81 and 145-180; these read HCGV…ESYD and RPGF…GRGT. Positions 59–73 are enriched in gly residues; that stretch reads SHGGGGGGGGGGGNR. Over residues 156 to 165 the composition is skewed to low complexity; that stretch reads SYSSYSSFSS. The short motif at 240–263 is the Bipartite nuclear localization signal element; it reads KRKMMPQPYNKPGGTFIKKPKMTK. Residues 314–347 form a disordered region; that stretch reads FGDSKGEGKSEEEEKRRIEARREKQRRRREKNSE. The span at 317–335 shows a compositional bias: basic and acidic residues; the sequence is SKGEGKSEEEEKRRIEARR. 2 consecutive C2H2 AKAP95-type zinc fingers follow at residues 359–381 and 452–475; these read CSFC…SAAH and CSAC…SPDH. Residues 516 to 566 form a disordered region; sequence PFEINDQAQEQQTEEEDKAEEPAEGEEEEEEEEEEETEEQTDFTLDHTEDN. Over residues 527–556 the composition is skewed to acidic residues; it reads QTEEEDKAEEPAEGEEEEEEEEEEETEEQT.

It belongs to the AKAP95 family. Component of the DBIRD complex.

It localises to the nucleus. In terms of biological role, core component of the DBIRD complex, a multiprotein complex that acts at the interface between core mRNP particles and RNA polymerase II (RNAPII) and integrates transcript elongation with the regulation of alternative splicing. The chain is DBIRD complex subunit ZNF326 (ZNF326) from Gallus gallus (Chicken).